The primary structure comprises 722 residues: MSDVRIPGVGAGKYDNLIQSLMKKERIPRDNAAAKVKVYEVQNNALKDVERYARDLRDAVKGLYSFNNPFAEKEAHSSNERAFTVDATRDAAEQNHTLRVKDIAQGDAFLSDPLPEDFRVPSGTYTFCIGEKKICVSWKGGHYRDFIRAVNKQGKDSLTLSEIKTSGASRALLFRSELTGKSSRLSFEDAALDLALRLRVVQEARSDVFTQDVLSVGPGKHARLDFPHPLRAQAGLTLEFVASLEGASIANEESRAHTPAQGGAPTSSHGNTASAAHNQDGAAAVRPTEPANGAPVQEETSSVFFEGVTVKNEASQGDLPTTDGLEKYPAVDDKGDNPRAPGESQGTATHEGSGSSTDNADDTRSTGALAGSGKLALESLQGHALPLPPLVLTQNAPQMVSIPLREYGDVRALILDNAQARGALTLRAIRVRAEDAPGGYVPVNPASQAQDAAFDFDGVHVTRGTNSITDLIPGVTLSLHERTEKTETLSVTPDVNAMKNAIIEFVAKYNRLMAEINIVTSNKSAIIDELAYLTPEEKKKETEQLGSLHGDSTLLMLKDRLRRNTSNAYRAGDDGASRTLAHIGISTKAHASSGINTAQLRGYLEIDEEKLHSSLNAQKDQVRALFGHDSDGDLLVDNGVAFTLTELLNPYLGRSGIFAIRSNGVDERIKSTEKRVETYDKQLEKKERELRHKYHTMDGALRSLQKQSDAIQNFNQSVRNRN.

2 disordered regions span residues asparagine 251–glutamate 299 and lysine 311–alanine 368. Residues alanine 264–histidine 277 are compositionally biased toward polar residues. A compositionally biased stretch (basic and acidic residues) spans glycine 324–asparagine 337. The span at serine 344 to aspartate 358 shows a compositional bias: polar residues. Residues isoleucine 660–alanine 710 are a coiled coil.

This sequence belongs to the FliD family. As to quaternary structure, homopentamer.

The protein localises to the periplasmic flagellum. Its subcellular location is the periplasm. Its function is as follows. Required for the morphogenesis and for the elongation of the flagellar filament by facilitating polymerization of the flagellin monomers at the tip of growing filament. Forms a capping structure, which prevents flagellin subunits (transported through the central channel of the flagellum) from leaking out without polymerization at the distal end. This is Flagellar hook-associated protein 2 (fliD) from Treponema pallidum (strain Nichols).